The chain runs to 75 residues: uncharacterized protein (75 aa).

This sequence belongs to the herpesviridae UL91 family.

This is an uncharacterized protein from Saimiriine herpesvirus 2 (strain 11) (SaHV-2).